The sequence spans 160 residues: SsrA-binding protein (160 aa).

Belongs to the SmpB family.

It localises to the cytoplasm. Functionally, required for rescue of stalled ribosomes mediated by trans-translation. Binds to transfer-messenger RNA (tmRNA), required for stable association of tmRNA with ribosomes. tmRNA and SmpB together mimic tRNA shape, replacing the anticodon stem-loop with SmpB. tmRNA is encoded by the ssrA gene; the 2 termini fold to resemble tRNA(Ala) and it encodes a 'tag peptide', a short internal open reading frame. During trans-translation Ala-aminoacylated tmRNA acts like a tRNA, entering the A-site of stalled ribosomes, displacing the stalled mRNA. The ribosome then switches to translate the ORF on the tmRNA; the nascent peptide is terminated with the 'tag peptide' encoded by the tmRNA and targeted for degradation. The ribosome is freed to recommence translation, which seems to be the essential function of trans-translation. In Enterobacter sp. (strain 638), this protein is SsrA-binding protein.